Here is a 375-residue protein sequence, read N- to C-terminus: Erythronate-4-phosphate dehydrogenase (375 aa).

Positions 45 and 66 each coordinate substrate. NAD(+) is bound by residues Asp146, Thr175, 206-208 (ASR), and Asp232. Arg208 is an active-site residue. Glu237 is a catalytic residue. His254 functions as the Proton donor in the catalytic mechanism. Gly257 contributes to the NAD(+) binding site. Tyr258 is a binding site for substrate.

The protein belongs to the D-isomer specific 2-hydroxyacid dehydrogenase family. PdxB subfamily. As to quaternary structure, homodimer.

It localises to the cytoplasm. The catalysed reaction is 4-phospho-D-erythronate + NAD(+) = (R)-3-hydroxy-2-oxo-4-phosphooxybutanoate + NADH + H(+). The protein operates within cofactor biosynthesis; pyridoxine 5'-phosphate biosynthesis; pyridoxine 5'-phosphate from D-erythrose 4-phosphate: step 2/5. In terms of biological role, catalyzes the oxidation of erythronate-4-phosphate to 3-hydroxy-2-oxo-4-phosphonooxybutanoate. The protein is Erythronate-4-phosphate dehydrogenase of Photorhabdus laumondii subsp. laumondii (strain DSM 15139 / CIP 105565 / TT01) (Photorhabdus luminescens subsp. laumondii).